The primary structure comprises 305 residues: Ornithine carbamoyltransferase (305 aa).

Carbamoyl phosphate-binding positions include 47–50 (STRT), R98, and 125–128 (HPCQ). L-ornithine-binding positions include N156, D221, and 225–226 (SM). Residues 262–263 (CL) and R290 each bind carbamoyl phosphate.

This sequence belongs to the aspartate/ornithine carbamoyltransferase superfamily. OTCase family.

It localises to the cytoplasm. It catalyses the reaction carbamoyl phosphate + L-ornithine = L-citrulline + phosphate + H(+). The protein operates within amino-acid biosynthesis; L-arginine biosynthesis; L-arginine from L-ornithine and carbamoyl phosphate: step 1/3. Reversibly catalyzes the transfer of the carbamoyl group from carbamoyl phosphate (CP) to the N(epsilon) atom of ornithine (ORN) to produce L-citrulline. The polypeptide is Ornithine carbamoyltransferase (Methanococcus vannielii (strain ATCC 35089 / DSM 1224 / JCM 13029 / OCM 148 / SB)).